Here is a 255-residue protein sequence, read N- to C-terminus: Hydroxyacylglutathione hydrolase (255 aa).

The Zn(2+) site is built by His56, His58, Asp60, His61, His114, Asp133, and His171.

This sequence belongs to the metallo-beta-lactamase superfamily. Glyoxalase II family. In terms of assembly, monomer. It depends on Zn(2+) as a cofactor.

It catalyses the reaction an S-(2-hydroxyacyl)glutathione + H2O = a 2-hydroxy carboxylate + glutathione + H(+). The protein operates within secondary metabolite metabolism; methylglyoxal degradation; (R)-lactate from methylglyoxal: step 2/2. In terms of biological role, thiolesterase that catalyzes the hydrolysis of S-D-lactoyl-glutathione to form glutathione and D-lactic acid. This Nitrobacter winogradskyi (strain ATCC 25391 / DSM 10237 / CIP 104748 / NCIMB 11846 / Nb-255) protein is Hydroxyacylglutathione hydrolase.